The sequence spans 259 residues: Small ribosomal subunit protein uS2 (259 aa).

This sequence belongs to the universal ribosomal protein uS2 family.

In Streptococcus pneumoniae (strain CGSP14), this protein is Small ribosomal subunit protein uS2.